The sequence spans 498 residues: ATP synthase subunit beta, chloroplastic (498 aa).

172–179 (GGAGVGKT) lines the ATP pocket.

This sequence belongs to the ATPase alpha/beta chains family. As to quaternary structure, F-type ATPases have 2 components, CF(1) - the catalytic core - and CF(0) - the membrane proton channel. CF(1) has five subunits: alpha(3), beta(3), gamma(1), delta(1), epsilon(1). CF(0) has four main subunits: a(1), b(1), b'(1) and c(9-12).

It localises to the plastid. Its subcellular location is the chloroplast thylakoid membrane. It catalyses the reaction ATP + H2O + 4 H(+)(in) = ADP + phosphate + 5 H(+)(out). Produces ATP from ADP in the presence of a proton gradient across the membrane. The catalytic sites are hosted primarily by the beta subunits. In Asarum canadense (Wild ginger), this protein is ATP synthase subunit beta, chloroplastic.